The following is a 117-amino-acid chain: ATP-dependent Clp protease adapter protein ClpS 1 (117 aa).

Positions Met1–Thr33 are disordered.

The protein belongs to the ClpS family. Binds to the N-terminal domain of the chaperone ClpA.

Its function is as follows. Involved in the modulation of the specificity of the ClpAP-mediated ATP-dependent protein degradation. The sequence is that of ATP-dependent Clp protease adapter protein ClpS 1 from Rhizobium meliloti (strain 1021) (Ensifer meliloti).